The primary structure comprises 321 residues: Serpentine receptor class delta-63 (321 aa).

7 helical membrane passes run Leu14–Thr34, Val41–Ala61, Tyr83–Val103, Leu128–Ile148, Ala190–Trp208, Asn240–Ile260, and Thr273–Ile293.

Belongs to the nematode receptor-like protein srd family.

Its subcellular location is the membrane. In Caenorhabditis elegans, this protein is Serpentine receptor class delta-63 (srd-63).